We begin with the raw amino-acid sequence, 213 residues long: 3-isopropylmalate dehydratase small subunit (213 aa).

The protein belongs to the LeuD family. LeuD type 1 subfamily. As to quaternary structure, heterodimer of LeuC and LeuD.

It carries out the reaction (2R,3S)-3-isopropylmalate = (2S)-2-isopropylmalate. It participates in amino-acid biosynthesis; L-leucine biosynthesis; L-leucine from 3-methyl-2-oxobutanoate: step 2/4. In terms of biological role, catalyzes the isomerization between 2-isopropylmalate and 3-isopropylmalate, via the formation of 2-isopropylmaleate. This is 3-isopropylmalate dehydratase small subunit from Pseudomonas syringae pv. tomato (strain ATCC BAA-871 / DC3000).